The sequence spans 621 residues: uncharacterized protein (621 aa).

4 stretches are compositionally biased toward low complexity: residues 1–10 (MIEDNINNNE), 63–79 (TEPL…TTPS), 137–182 (NNNN…NNFN), and 309–347 (NQSI…NNNN). Disordered stretches follow at residues 1–29 (MIED…DKNN), 63–100 (TEPL…SNKT), 135–194 (DDNN…KDND), 307–374 (KTNQ…EDDT), 430–471 (YNNN…IAKR), 492–539 (KQSQ…IKII), and 594–614 (PTQI…SPSK). The segment covering 348-357 (STLTSSNSLS) has biased composition (polar residues). Composition is skewed to low complexity over residues 431-459 (NNNN…NNNN), 496-539 (NNNN…IKII), and 597-613 (INSN…SSPS).

This is an uncharacterized protein from Dictyostelium discoideum (Social amoeba).